Reading from the N-terminus, the 60-residue chain is Adenylate kinase isoenzyme 1 (60 aa).

ATP is bound at residue 9–14 (GSGKGT). Serine 25 is modified (phosphoserine). The segment at 25–53 (STGDLLRVDSSNGFLIDGYPRQGEEFERK) is NMP. The AMP site is built by threonine 26 and arginine 31.

This sequence belongs to the adenylate kinase family. AK1 subfamily. As to quaternary structure, monomer. It depends on Mg(2+) as a cofactor.

It localises to the cytoplasm. It carries out the reaction a ribonucleoside 5'-phosphate + ATP = a ribonucleoside 5'-diphosphate + ADP. It catalyses the reaction AMP + ATP = 2 ADP. The catalysed reaction is dAMP + ATP = dADP + ADP. The enzyme catalyses dATP + AMP = dADP + ADP. It carries out the reaction dAMP + dATP = 2 dADP. It catalyses the reaction a 2'-deoxyribonucleoside 5'-diphosphate + ATP = a 2'-deoxyribonucleoside 5'-triphosphate + ADP. The catalysed reaction is a ribonucleoside 5'-diphosphate + ATP = a ribonucleoside 5'-triphosphate + ADP. The enzyme catalyses CDP + GTP = CTP + GDP. It carries out the reaction GDP + ATP = GTP + ADP. It catalyses the reaction UDP + ATP = UTP + ADP. The catalysed reaction is GTP + UDP = UTP + GDP. The enzyme catalyses dTDP + GTP = dTTP + GDP. It carries out the reaction dCDP + GTP = dCTP + GDP. It catalyses the reaction dGDP + ATP = dGTP + ADP. The catalysed reaction is dADP + GTP = dATP + GDP. The enzyme catalyses thiamine diphosphate + ADP = thiamine triphosphate + AMP. In terms of biological role, catalyzes the reversible transfer of the terminal phosphate group between ATP and AMP. Also displays broad nucleoside diphosphate kinase activity. Plays an important role in cellular energy homeostasis and in adenine nucleotide metabolism. Also catalyzes at a very low rate the synthesis of thiamine triphosphate (ThTP) from thiamine diphosphate (ThDP) and ADP. The polypeptide is Adenylate kinase isoenzyme 1 (Ak1) (Mesocricetus auratus (Golden hamster)).